A 397-amino-acid chain; its full sequence is MKYAILIGDGMADYPIEKLGNRTILQAARTPAMDSIAARGRAGLAKTVPDSFPPGSDVANMSILGYDPATYYSGRAPLEAASMGVALAADDVAFRCNLITTEHGMIKDYSAGHISSDEAEILIDTLDYELSTENIRFYPGISYRHLIVAGNNLGAETECTPPHDITGEKIDKYLPRGKDGEFFSELIEASKVVLELHPVNLKRVEEGKNPANSIWVWGQGYAPKFTAFMKLYGKKGAVISAVDLLKGIGIYAGLDVIEVHGATGYLDTNYEGKVRAAIEALKTRDLVFVHVEAPDEAGHEGSIEKKLKAVEDFDSRIVAPILEYAENSDEPFTILVLPDHPTPISVKTHTRDPIPFAIYRTDKPETDNVEAFDEESVKNGSMGLVKASDLIGILIKS.

It belongs to the BPG-independent phosphoglycerate mutase family. A-PGAM subfamily.

The enzyme catalyses (2R)-2-phosphoglycerate = (2R)-3-phosphoglycerate. It participates in carbohydrate degradation; glycolysis; pyruvate from D-glyceraldehyde 3-phosphate: step 3/5. Functionally, catalyzes the interconversion of 2-phosphoglycerate and 3-phosphoglycerate. The sequence is that of 2,3-bisphosphoglycerate-independent phosphoglycerate mutase (apgM) from Methanosarcina mazei (strain ATCC BAA-159 / DSM 3647 / Goe1 / Go1 / JCM 11833 / OCM 88) (Methanosarcina frisia).